The sequence spans 436 residues: F-box/LRR-repeat protein 20 (436 aa).

Residues 22–68 (AVINKKLPKELLLRIFSFLDVVTLCRCAQVSRAWNVLALDGSNWQRI) form the F-box domain. LRR repeat units lie at residues 74–100 (QRDI…SLRG), 101–126 (CLGV…NLNG), 127–152 (CTKT…DLAS), 153–178 (CTSI…NISW), 179–204 (CDQV…FLKG), 205–230 (CTQL…NLQT), 231–256 (CLQI…CASG), 257–282 (CSNI…EVAR), 283–308 (CSQL…DLEE), 309–334 (CVQI…SLSH), 335–363 (CELI…ELDN), 364–388 (CPLI…ELYD), and 389–414 (CQQI…AYFA). Thr-417 is subject to Phosphothreonine. The residue at position 421 (Ser-421) is a Phosphoserine.

As to quaternary structure, interacts with SKP1 and CUL1.

The protein localises to the cytoplasm. Functionally, substrate-recognition component of the SCF (SKP1-CUL1-F-box protein)-type E3 ubiquitin ligase complex. Role in neural transmission. The polypeptide is F-box/LRR-repeat protein 20 (FBXL20) (Bos taurus (Bovine)).